Consider the following 353-residue polypeptide: Phosphate acyltransferase (353 aa).

It belongs to the PlsX family. In terms of assembly, homodimer. Probably interacts with PlsY.

It localises to the cytoplasm. It catalyses the reaction a fatty acyl-[ACP] + phosphate = an acyl phosphate + holo-[ACP]. It functions in the pathway lipid metabolism; phospholipid metabolism. Functionally, catalyzes the reversible formation of acyl-phosphate (acyl-PO(4)) from acyl-[acyl-carrier-protein] (acyl-ACP). This enzyme utilizes acyl-ACP as fatty acyl donor, but not acyl-CoA. This is Phosphate acyltransferase from Rhodopseudomonas palustris (strain BisB5).